A 261-amino-acid chain; its full sequence is Glucosamine-6-phosphate deaminase (261 aa).

The Proton acceptor; for enolization step role is filled by Asp-67. Asp-136 serves as the catalytic For ring-opening step. The active-site Proton acceptor; for ring-opening step is the His-138. Catalysis depends on Glu-143, which acts as the For ring-opening step.

This sequence belongs to the glucosamine/galactosamine-6-phosphate isomerase family. NagB subfamily.

The catalysed reaction is alpha-D-glucosamine 6-phosphate + H2O = beta-D-fructose 6-phosphate + NH4(+). Its pathway is amino-sugar metabolism; N-acetylneuraminate degradation; D-fructose 6-phosphate from N-acetylneuraminate: step 5/5. Catalyzes the reversible isomerization-deamination of glucosamine 6-phosphate (GlcN6P) to form fructose 6-phosphate (Fru6P) and ammonium ion. This chain is Glucosamine-6-phosphate deaminase, found in Streptomyces coelicolor (strain ATCC BAA-471 / A3(2) / M145).